The primary structure comprises 333 residues: Transcription factor TGA2.2 (333 aa).

Residues 1 to 14 (MADASSRTDTSTVL) are compositionally biased toward polar residues. Residues 1 to 48 (MADASSRTDTSTVLDTDDKNQMVDGQSGAIVPSNSSDRSDRSDKPMDQ) form a disordered region. The segment covering 37-48 (DRSDRSDKPMDQ) has biased composition (basic and acidic residues). The bZIP domain occupies 47–91 (DQKVLRRLAQNREAARKSRLRKKAYVQQLESSKLKLASLEQEINK). The tract at residues 49–69 (KVLRRLAQNREAARKSRLRKK) is basic motif. Residues 75 to 89 (LESSKLKLASLEQEI) form a leucine-zipper region. Residues 114–330 (AMTFDLEYAR…RALSSLWLAR (217 aa)) form the DOG1 domain.

It belongs to the bZIP family. In terms of assembly, interacts with NPR1/NH1. Interacts with NPR3/NH3.

It is found in the nucleus. In terms of biological role, transcriptional regulator involved in defense response. The protein is Transcription factor TGA2.2 of Oryza sativa subsp. japonica (Rice).